We begin with the raw amino-acid sequence, 242 residues long: Ribonuclease PH (242 aa).

Residues Arg87 and 125–127 (GTR) contribute to the phosphate site.

This sequence belongs to the RNase PH family. As to quaternary structure, homohexameric ring arranged as a trimer of dimers.

The catalysed reaction is tRNA(n+1) + phosphate = tRNA(n) + a ribonucleoside 5'-diphosphate. In terms of biological role, phosphorolytic 3'-5' exoribonuclease that plays an important role in tRNA 3'-end maturation. Removes nucleotide residues following the 3'-CCA terminus of tRNAs; can also add nucleotides to the ends of RNA molecules by using nucleoside diphosphates as substrates, but this may not be physiologically important. Probably plays a role in initiation of 16S rRNA degradation (leading to ribosome degradation) during starvation. This chain is Ribonuclease PH, found in Thermosynechococcus vestitus (strain NIES-2133 / IAM M-273 / BP-1).